The primary structure comprises 603 residues: Zyxin (603 aa).

Pro residues predominate over residues 1–13 (MGPPPPPPPPPLL). Disordered regions lie at residues 1–131 (MGPP…HRDP), 166–193 (TQYA…PYSS), 218–237 (ATTT…NKYG), 310–333 (RDEG…SASS), and 363–395 (LNQP…TTST). The segment covering 69 to 95 (VRGDVENLSDGRLDRPHQQLPDGDRTY) has biased composition (basic and acidic residues). Positions 184-193 (EATYVSPYSS) are enriched in polar residues. The segment covering 218 to 234 (ATTTTSSNSLNENNNSN) has biased composition (low complexity). Composition is skewed to polar residues over residues 315 to 333 (TESQ…SASS), 363 to 373 (LNQPADTSPSI), and 382 to 391 (PDSSRANYSA). 3 consecutive LIM zinc-binding domains span residues 409 to 470 (NICV…SLEK), 471 to 529 (CTAC…KFAP), and 530 to 601 (RCAL…RVVS).

This sequence belongs to the zyxin/ajuba family. Interacts with dyc-1. Interacts with glh-1 and glh-3. Expressed in neurons and body wall muscle. Expressed in pharyngeal, enteric and uterine muscles and in spermatheca.

The protein resides in the nucleus. It is found in the cytoplasm. Its subcellular location is the myofibril. It localises to the sarcomere. The protein localises to the m line. The protein resides in the cell projection. It is found in the axon. Its subcellular location is the cell junction. It localises to the focal adhesion. The protein localises to the cytoskeleton. Functions both as a mechanical stabilizer (via LIM domains) of focal adhesions, and as a sensor component for muscle cell damage (via N-terminus). Regulates, stabilizes and maintains posterior lateral mechanosensory (PLM) synaptic branch extension and new synapse formation and growth during larval development. This is Zyxin from Caenorhabditis elegans.